Here is a 415-residue protein sequence, read N- to C-terminus: Corticotropin-releasing factor receptor 1 (415 aa).

The first 23 residues, 1-23 (MARHPQLRLVKALLLLGLNPVSA), serve as a signal peptide directing secretion. Over 24–111 (SLQDQHCESL…CQEILNEEKK (88 aa)) the chain is Extracellular. 3 disulfides stabilise this stretch: Cys30–Cys54, Cys44–Cys87, and Cys68–Cys102. Residues Asn38, Asn78, and Asn98 are each glycosylated (N-linked (GlcNAc...) asparagine). Residues 99–108 (YSECQEILNE) are important for peptide agonist binding. The helical transmembrane segment at 112–142 (SKVHYHVAVIINYLGHCISLVALLVAFVLFL) threads the bilayer. At 143-149 (RLRSIRC) the chain is on the cytoplasmic side. The helical transmembrane segment at 150–174 (LRNIIHWNLISAFILRNATWFVVQL) threads the bilayer. Over 175 to 189 (TMSPEVHQSNVGWCR) the chain is Extracellular. An intrachain disulfide couples Cys188 to Cys258. The chain crosses the membrane as a helical span at residues 190-218 (LVTAAYNYFHVTNFFWMFGEGCYLHTAIV). Topologically, residues 219–225 (LTYSTDR) are cytoplasmic. A helical membrane pass occupies residues 226–253 (LRKWMFICIGWGVPFPIIVAWAIGKLYY). At 254–269 (DNEKCWFGKRPGVYTD) the chain is on the extracellular side. The helical transmembrane segment at 270 to 295 (YIYQGPMILVLLINFIFLFNIVRILM) threads the bilayer. An important for antagonist binding region spans residues 280–290 (LLINFIFLFNI). At 296–306 (TKLRASTTSET) the chain is on the cytoplasmic side. At Ser301 the chain carries Phosphoserine; by PKA. A helical transmembrane segment spans residues 307-331 (IQYRKAVKATLVLLPLLGITYMLFF). Residues 332-338 (VNPGEDE) lie on the Extracellular side of the membrane. A helical membrane pass occupies residues 339-368 (VSRVVFIYFNSFLESFQGFFVSVFYCFLNS). Over 369–415 (EVRSAIRKRWHRWQDKHSIRARVARAMSIPTSPTRVSFHSIKQSTAV) the chain is Cytoplasmic.

This sequence belongs to the G-protein coupled receptor 2 family. In terms of assembly, heterodimer; heterodimerizes with GPER1. Interacts (via N-terminal extracellular domain) with CRH and UCN. Interacts with DLG1; this inhibits endocytosis of CRHR1 after agonist binding. C-terminal Ser or Thr residues may be phosphorylated. In terms of processing, phosphorylation at Ser-301 by PKA prevents maximal coupling to Gq-protein, and thereby negatively regulates downstream signaling. As to expression, expressed abundantly in the pituitary, cerebral cortex, hippocampus, amygdala and cerebellum.

Its subcellular location is the cell membrane. The protein resides in the endosome. Its function is as follows. G-protein coupled receptor for CRH (corticotropin-releasing factor) and UCN (urocortin). Has high affinity for CRH and UCN. Ligand binding causes a conformation change that triggers signaling via guanine nucleotide-binding proteins (G proteins) and down-stream effectors, such as adenylate cyclase. Promotes the activation of adenylate cyclase, leading to increased intracellular cAMP levels. Inhibits the activity of the calcium channel CACNA1H. Required for normal embryonic development of the adrenal gland and for normal hormonal responses to stress. Plays a role in the response to anxiogenic stimuli. The protein is Corticotropin-releasing factor receptor 1 (CRHR1) of Macaca mulatta (Rhesus macaque).